A 513-amino-acid polypeptide reads, in one-letter code: Probable cytosol aminopeptidase (513 aa).

Mn(2+)-binding residues include Lys-275 and Asp-280. Lys-287 is a catalytic residue. The Mn(2+) site is built by Asp-298, Asp-357, and Glu-359. Arg-361 is a catalytic residue.

It belongs to the peptidase M17 family. Mn(2+) serves as cofactor.

The protein localises to the cytoplasm. The enzyme catalyses Release of an N-terminal amino acid, Xaa-|-Yaa-, in which Xaa is preferably Leu, but may be other amino acids including Pro although not Arg or Lys, and Yaa may be Pro. Amino acid amides and methyl esters are also readily hydrolyzed, but rates on arylamides are exceedingly low.. It catalyses the reaction Release of an N-terminal amino acid, preferentially leucine, but not glutamic or aspartic acids.. Functionally, presumably involved in the processing and regular turnover of intracellular proteins. Catalyzes the removal of unsubstituted N-terminal amino acids from various peptides. The chain is Probable cytosol aminopeptidase from Streptomyces avermitilis (strain ATCC 31267 / DSM 46492 / JCM 5070 / NBRC 14893 / NCIMB 12804 / NRRL 8165 / MA-4680).